We begin with the raw amino-acid sequence, 424 residues long: Tyrosine--tRNA ligase (424 aa).

Tyr-37 is a binding site for L-tyrosine. A 'HIGH' region motif is present at residues 42–51; that stretch reads PTADSLHIGS. Tyr-174 and Gln-178 together coordinate L-tyrosine. Positions 234–238 match the 'KMSKS' region motif; sequence KFGKT. Lys-237 lines the ATP pocket. An S4 RNA-binding domain is found at 357 to 422; the sequence is SGLIDALAAG…RGKKLYALVD (66 aa).

The protein belongs to the class-I aminoacyl-tRNA synthetase family. TyrS type 1 subfamily. As to quaternary structure, homodimer.

The protein localises to the cytoplasm. It catalyses the reaction tRNA(Tyr) + L-tyrosine + ATP = L-tyrosyl-tRNA(Tyr) + AMP + diphosphate + H(+). Catalyzes the attachment of tyrosine to tRNA(Tyr) in a two-step reaction: tyrosine is first activated by ATP to form Tyr-AMP and then transferred to the acceptor end of tRNA(Tyr). In Chromobacterium violaceum (strain ATCC 12472 / DSM 30191 / JCM 1249 / CCUG 213 / NBRC 12614 / NCIMB 9131 / NCTC 9757 / MK), this protein is Tyrosine--tRNA ligase.